Consider the following 102-residue polypeptide: NADH-quinone oxidoreductase subunit K (102 aa).

3 consecutive transmembrane segments (helical) span residues 4–24, 30–50, and 62–82; these read IPMEHGLILASILFALGLVGL, MLFVLMSLEIMMNSAGLAFIV, and VMFLLVITLAAAEASVGLALL.

This sequence belongs to the complex I subunit 4L family. As to quaternary structure, NDH-1 is composed of 14 different subunits. Subunits NuoA, H, J, K, L, M, N constitute the membrane sector of the complex.

Its subcellular location is the cell inner membrane. The enzyme catalyses a quinone + NADH + 5 H(+)(in) = a quinol + NAD(+) + 4 H(+)(out). Its function is as follows. NDH-1 shuttles electrons from NADH, via FMN and iron-sulfur (Fe-S) centers, to quinones in the respiratory chain. The immediate electron acceptor for the enzyme in this species is believed to be ubiquinone. Couples the redox reaction to proton translocation (for every two electrons transferred, four hydrogen ions are translocated across the cytoplasmic membrane), and thus conserves the redox energy in a proton gradient. This is NADH-quinone oxidoreductase subunit K from Chromohalobacter salexigens (strain ATCC BAA-138 / DSM 3043 / CIP 106854 / NCIMB 13768 / 1H11).